Here is a 487-residue protein sequence, read N- to C-terminus: 3-octaprenyl-4-hydroxybenzoate carboxy-lyase (487 aa).

Asn172 is a binding site for Mn(2+). Prenylated FMN is bound by residues 175–177 (IYR), 189–191 (RWL), and 194–195 (RG). Glu238 provides a ligand contact to Mn(2+). Asp287 acts as the Proton donor in catalysis.

This sequence belongs to the UbiD family. Homohexamer. Requires prenylated FMN as cofactor. Mn(2+) serves as cofactor.

It is found in the cell membrane. The enzyme catalyses a 4-hydroxy-3-(all-trans-polyprenyl)benzoate + H(+) = a 2-(all-trans-polyprenyl)phenol + CO2. The protein operates within cofactor biosynthesis; ubiquinone biosynthesis. Catalyzes the decarboxylation of 3-octaprenyl-4-hydroxy benzoate to 2-octaprenylphenol, an intermediate step in ubiquinone biosynthesis. The polypeptide is 3-octaprenyl-4-hydroxybenzoate carboxy-lyase (Dechloromonas aromatica (strain RCB)).